A 118-amino-acid chain; its full sequence is Small ribosomal subunit protein mS37 (118 aa).

In terms of domain architecture, CHCH spans 42 to 84 (EATCITEMSVMMACWKQNEFRDDACRKEIQGFLDCAARAQEAR). 2 consecutive short sequence motifs (cx9C motif) follow at residues 45–55 (CITEMSVMMAC) and 66–76 (CRKEIQGFLDC). 2 disulfides stabilise this stretch: C45–C76 and C55–C66.

This sequence belongs to the mitochondrion-specific ribosomal protein mS37 family. In terms of assembly, component of the mitochondrial small ribosomal subunit (mt-SSU). Mature mammalian 55S mitochondrial ribosomes consist of a small (28S) and a large (39S) subunit. The 28S small subunit contains a 12S ribosomal RNA (12S mt-rRNA) and 30 different proteins. The 39S large subunit contains a 16S rRNA (16S mt-rRNA), a copy of mitochondrial valine transfer RNA (mt-tRNA(Val)), which plays an integral structural role, and 52 different proteins.

Its subcellular location is the mitochondrion. The protein resides in the nucleus. The sequence is that of Small ribosomal subunit protein mS37 (CHCHD1) from Homo sapiens (Human).